Consider the following 424-residue polypeptide: CinA-like protein (424 aa).

It belongs to the CinA family.

The polypeptide is CinA-like protein (Shewanella putrefaciens (strain CN-32 / ATCC BAA-453)).